The chain runs to 337 residues: MDSFKPYLAKVATGAALTREEARTAFDHLLSGEVTHAQAGAFLMALRVRGEAADEIVGAAGALRERMVRVAAPPGAIDIVGTGGDHSGSYNVSTLAAIITASCGVPVAKHGNRAASSRSGAADVLAALGVRLGLDPEALAQCLAQAGLCFMFAQTHHASMRHVAPVRVELGTRTLFNVLGPLCNPAGVSGQLFGVYAASLAEPLTRVLADLGSTRVWTVHGSDGLDEITTTGPTAVVALEDGAIRRFTIDPRELGLALAAPEDLRGADPEHNAAALRAVLDGARTPYRDIAVLNAAAALVVAGAAANLGEGVARAAQAVDSGAARATLDRLVAVSNA.

5-phospho-alpha-D-ribose 1-diphosphate-binding positions include Gly-81, 84 to 85, Ser-89, 91 to 94, 109 to 117, and Ala-121; these read GD, NVST, and KHGNRAASS. Residue Gly-81 participates in anthranilate binding. Ser-93 is a Mg(2+) binding site. Asn-112 serves as a coordination point for anthranilate. Anthranilate is bound at residue Arg-167. Mg(2+) is bound by residues Asp-226 and Glu-227.

This sequence belongs to the anthranilate phosphoribosyltransferase family. As to quaternary structure, homodimer. It depends on Mg(2+) as a cofactor.

The catalysed reaction is N-(5-phospho-beta-D-ribosyl)anthranilate + diphosphate = 5-phospho-alpha-D-ribose 1-diphosphate + anthranilate. It functions in the pathway amino-acid biosynthesis; L-tryptophan biosynthesis; L-tryptophan from chorismate: step 2/5. Functionally, catalyzes the transfer of the phosphoribosyl group of 5-phosphorylribose-1-pyrophosphate (PRPP) to anthranilate to yield N-(5'-phosphoribosyl)-anthranilate (PRA). The sequence is that of Anthranilate phosphoribosyltransferase from Methylobacterium nodulans (strain LMG 21967 / CNCM I-2342 / ORS 2060).